The chain runs to 545 residues: CTP synthase (545 aa).

Positions 1–266 are amidoligase domain; that stretch reads MTTKYIFVTG…DEICVKRFGL (266 aa). Serine 14 is a binding site for CTP. Residue serine 14 participates in UTP binding. Residues 15-20 and aspartate 72 contribute to the ATP site; that span reads SLGKGI. Residues aspartate 72 and glutamate 140 each contribute to the Mg(2+) site. CTP contacts are provided by residues 147 to 149, 187 to 192, and lysine 223; these read DIE and KTKPTQ. UTP-binding positions include 187-192 and lysine 223; that span reads KTKPTQ. 239 to 241 serves as a coordination point for ATP; it reads RDV. One can recognise a Glutamine amidotransferase type-1 domain in the interval 291–542; sequence IIGMVGKYTE…IKSAIDHQQG (252 aa). Glycine 352 serves as a coordination point for L-glutamine. The Nucleophile; for glutamine hydrolysis role is filled by cysteine 379. L-glutamine is bound by residues 380–383, glutamate 403, and arginine 470; that span reads LGMQ. Active-site residues include histidine 515 and glutamate 517.

Belongs to the CTP synthase family. Homotetramer.

The catalysed reaction is UTP + L-glutamine + ATP + H2O = CTP + L-glutamate + ADP + phosphate + 2 H(+). The enzyme catalyses L-glutamine + H2O = L-glutamate + NH4(+). It catalyses the reaction UTP + NH4(+) + ATP = CTP + ADP + phosphate + 2 H(+). Its pathway is pyrimidine metabolism; CTP biosynthesis via de novo pathway; CTP from UDP: step 2/2. Allosterically activated by GTP, when glutamine is the substrate; GTP has no effect on the reaction when ammonia is the substrate. The allosteric effector GTP functions by stabilizing the protein conformation that binds the tetrahedral intermediate(s) formed during glutamine hydrolysis. Inhibited by the product CTP, via allosteric rather than competitive inhibition. Functionally, catalyzes the ATP-dependent amination of UTP to CTP with either L-glutamine or ammonia as the source of nitrogen. Regulates intracellular CTP levels through interactions with the four ribonucleotide triphosphates. In Psychromonas ingrahamii (strain DSM 17664 / CCUG 51855 / 37), this protein is CTP synthase.